Consider the following 203-residue polypeptide: Dephospho-CoA kinase (203 aa).

Residues 4 to 203 (VIGITGGIAT…EEGYIQSESE (200 aa)) enclose the DPCK domain. 12-17 (ATGKST) is an ATP binding site.

Belongs to the CoaE family.

Its subcellular location is the cytoplasm. It carries out the reaction 3'-dephospho-CoA + ATP = ADP + CoA + H(+). It functions in the pathway cofactor biosynthesis; coenzyme A biosynthesis; CoA from (R)-pantothenate: step 5/5. Its function is as follows. Catalyzes the phosphorylation of the 3'-hydroxyl group of dephosphocoenzyme A to form coenzyme A. In Staphylococcus epidermidis (strain ATCC 12228 / FDA PCI 1200), this protein is Dephospho-CoA kinase.